Here is a 388-residue protein sequence, read N- to C-terminus: Oligogalacturonide lyase (388 aa).

The protein localises to the periplasm. The catalysed reaction is 4-(4-deoxy-alpha-D-galact-4-enuronosyl)-D-galacturonate = 2 5-dehydro-4-deoxy-D-glucuronate. It functions in the pathway glycan metabolism; pectin degradation; 2-dehydro-3-deoxy-D-gluconate from pectin: step 3/5. Involved in degradation of pectin, which causes soft-rod disease in plants. The sequence is that of Oligogalacturonide lyase (ogl) from Pectobacterium atrosepticum (strain SCRI 1043 / ATCC BAA-672) (Erwinia carotovora subsp. atroseptica).